A 1064-amino-acid chain; its full sequence is Lysine-specific demethylase 4A (1064 aa).

Ala2 carries the N-acetylalanine modification. In terms of domain architecture, JmjN spans 14 to 56 (IMTFYPTMEEFRNFSRYIAYIESQGAHRAGLAKVVPPKEWKPR). Tyr132 contributes to the 2-oxoglutarate binding site. Positions 142–308 (EQHVDEWNIG…YGKQAVLCSC (167 aa)) constitute a JmjC domain. Fe cation is bound by residues His188 and Glu190. Asn198 and Lys206 together coordinate 2-oxoglutarate. Zn(2+) is bound by residues Cys234 and His240. Lys241 provides a ligand contact to 2-oxoglutarate. His276 contributes to the Fe cation binding site. Residues Cys306 and Cys308 each coordinate Zn(2+). 5 disordered regions span residues 354–384 (LKDS…EEGD), 434–489 (LAPV…LDLS), 502–537 (SGSK…QGQE), 549–573 (RGDG…SISE), and 590–643 (NKKT…LSQL). The span at 368–382 (ECPEEDVEAADQGEE) shows a compositional bias: acidic residues. Over residues 460 to 472 (TEVKFEELKNVKL) the composition is skewed to basic and acidic residues. Positions 473-482 (EEEDEEDEPE) are enriched in acidic residues. Over residues 509 to 525 (SSSLGSTSSQDSVSSDS) the composition is skewed to low complexity. Ser523 bears the Phosphoserine mark. The span at 528 to 537 (AESVSCQGQE) shows a compositional bias: polar residues. The segment covering 593-608 (TKGRRQPLSKLPRHHP) has biased composition (basic residues). The interval 597–638 (RQPLSKLPRHHPLVLQECGSDDETSEQLTPEEEAEETEAWAK) is interaction with NCOR1. A compositionally biased stretch (acidic residues) spans 615 to 634 (GSDDETSEQLTPEEEAEETE). The segment at 709–767 (MCFTTTGCSTDINLSTPYLEEDGTSMLVSCKKCSVRVHASCYGVPPAKASEEWMCSRCS) adopts a PHD-type 1 zinc-finger fold. The segment at 772-805 (EEDCCLCSLRGGALQRANDDRWVHVSCAVAILEA) adopts a C2HC pre-PHD-type zinc-finger fold. The PHD-type 2 zinc finger occupies 828-885 (LKCVFCKKRRKRNAGCCVQCSHGRCPTAFHVSCAQAAGVMMQPDDWPFVVFITCFRHK). Tudor domains are found at residues 897–954 (LSIT…CLQL) and 955–1011 (GPPA…EELP).

Belongs to the JHDM3 histone demethylase family. As to quaternary structure, interacts with histone deacetylase proteins HDAC1, HDAC2 and HDAC3. Interacts with RB and NCOR1. Interacts with VRK1. The cofactor is Fe(2+). Ubiquitinated by RNF8 and RNF168, leading to its degradation. Degradation promotes accessibility of H4K20me2 mark for DNA repair protein TP53BP1, which is then recruited. Also ubiquitinated by the SCF(FBXO22) complex; leading to proteasomal degradation. Widely expressed.

It localises to the nucleus. It carries out the reaction N(6),N(6),N(6)-trimethyl-L-lysyl(9)-[histone H3] + 2 2-oxoglutarate + 2 O2 = N(6)-methyl-L-lysyl(9)-[histone H3] + 2 formaldehyde + 2 succinate + 2 CO2. The catalysed reaction is N(6),N(6),N(6)-trimethyl-L-lysyl(36)-[histone H3] + 2 2-oxoglutarate + 2 O2 = N(6)-methyl-L-lysyl(36)-[histone H3] + 2 formaldehyde + 2 succinate + 2 CO2. Functionally, histone demethylase that specifically demethylates 'Lys-9' and 'Lys-36' residues of histone H3, thereby playing a central role in histone code. Does not demethylate histone H3 'Lys-4', H3 'Lys-27' nor H4 'Lys-20'. Demethylates trimethylated H3 'Lys-9' and H3 'Lys-36' residue, while it has no activity on mono- and dimethylated residues. Demethylation of Lys residue generates formaldehyde and succinate. Participates in transcriptional repression of ASCL2 and E2F-responsive promoters via the recruitment of histone deacetylases and NCOR1, respectively. The sequence is that of Lysine-specific demethylase 4A (Kdm4a) from Mus musculus (Mouse).